We begin with the raw amino-acid sequence, 69 residues long: Sec-independent protein translocase protein TatA (69 aa).

The helical transmembrane segment at 1–21 (MFGLGGQELILILLIILLLFG) threads the bilayer.

Belongs to the TatA/E family. As to quaternary structure, forms a complex with TatC.

The protein resides in the cell inner membrane. Its function is as follows. Part of the twin-arginine translocation (Tat) system that transports large folded proteins containing a characteristic twin-arginine motif in their signal peptide across membranes. TatA could form the protein-conducting channel of the Tat system. This is Sec-independent protein translocase protein TatA from Pelodictyon phaeoclathratiforme (strain DSM 5477 / BU-1).